The following is a 158-amino-acid chain: MIRFLGNIEAKADAKGRVFIPAQFRRQLQSGSEDKLIMRKDVFQDCLVLYPEEVWNEELDELRQRLNKWNANHQLIFRQFVSDVEIITMDGNGRILIPKRYLQITGIQSDVRFIGVDNKIEIWAKERAEKLFMEPKAFGAALEEIMKEERRTTNNELK.

2 SpoVT-AbrB domains span residues 7–54 (NIEA…PEEV) and 84–127 (VEII…AKER).

Belongs to the MraZ family. In terms of assembly, forms oligomers.

It localises to the cytoplasm. The protein resides in the nucleoid. The chain is Transcriptional regulator MraZ from Bacteroides fragilis (strain ATCC 25285 / DSM 2151 / CCUG 4856 / JCM 11019 / LMG 10263 / NCTC 9343 / Onslow / VPI 2553 / EN-2).